A 288-amino-acid polypeptide reads, in one-letter code: Hyaluronidase (288 aa).

N-linked (GlcNAc...) asparagine glycosylation occurs at Asn36. Glu66 serves as the catalytic Proton donor. Residues Cys142 and Cys154 are joined by a disulfide bond. N-linked (GlcNAc...) asparagine glycosylation is present at Asn282.

The protein belongs to the glycosyl hydrolase 56 family. Expressed by the venom gland.

The protein localises to the secreted. The enzyme catalyses Random hydrolysis of (1-&gt;4)-linkages between N-acetyl-beta-D-glucosamine and D-glucuronate residues in hyaluronate.. Its function is as follows. Hydrolyzes high molecular weight hyaluronic acid to produce small oligosaccharides. This is Hyaluronidase from Polybia paulista (Neotropical social wasp).